Consider the following 89-residue polypeptide: Small ribosomal subunit protein uS14A (89 aa).

The protein belongs to the universal ribosomal protein uS14 family. In terms of assembly, part of the 30S ribosomal subunit. Contacts proteins S3 and S10.

Its function is as follows. Binds 16S rRNA, required for the assembly of 30S particles and may also be responsible for determining the conformation of the 16S rRNA at the A site. The polypeptide is Small ribosomal subunit protein uS14A (Streptococcus agalactiae serotype Ia (strain ATCC 27591 / A909 / CDC SS700)).